The following is a 174-amino-acid chain: Phytochrome-interacting ankyrin-repeat protein 2 (174 aa).

Positions 1–13 are enriched in low complexity; sequence MLQEPSAAFSLRR. The tract at residues 1 to 29 is disordered; it reads MLQEPSAAFSLRRNSFRRRSPRSNVDDRG. The residue at position 15 (serine 15) is a Phosphoserine. ANK repeat units lie at residues 28–57, 65–94, and 100–129; these read RGWN…DVNA, KGVS…NIDA, and CGWT…FLAD.

In terms of assembly, interacts with phytochrome A (PHYA), both in Pr and Pfr forms. Binds to PIF3, a repressor of photomorphogenesis in response to phytochrome-mediated light signaling; this interaction may trigger the repression of PHYA-mediated PIF3 phosphorylation. Interacts with SIGE/SIG5 in mitochondrion. Interacts with RPS9M (via C terminus). Post-translationally, phosphorylated by PHYA. As to expression, mostly expressed in flowers, cotyledons, leaves and siliques, and, to a lower extent, in roots and stems. Also detected at low levels in seedlings grown in continuous dark or light conditions. Expressed in male and female gametophytes.

The protein localises to the cytoplasm. The protein resides in the nucleus. Its subcellular location is the mitochondrion. Its function is as follows. Promotes anthocyanin accumulation through interaction with PHYA, especially in response to far-red light, high light and sucrose treatment, probably by triggering A3G2XYLT/UF3GT expression. Required for gametophytes development as well as male-female gamete recognition during fertilization, possibly by regulating mitochondrial gene expression. Represses PHYA-mediated PIF3 phosphorylation. The chain is Phytochrome-interacting ankyrin-repeat protein 2 from Arabidopsis thaliana (Mouse-ear cress).